Here is a 32-residue protein sequence, read N- to C-terminus: QAVMNPENTFYSVKRIINEPTAASLAYGFDKK.

The protein belongs to the heat shock protein 70 family.

Functionally, acts as a chaperone. This chain is Chaperone protein DnaK, found in Anabaena sp. (strain L31).